The primary structure comprises 82 residues: uncharacterized protein (82 aa).

Over residues 55–64 the composition is skewed to polar residues; sequence DQNTAPSTPS. A disordered region spans residues 55 to 82; that stretch reads DQNTAPSTPSKILPKRLPSQSNLNNNNN.

This is an uncharacterized protein from Dictyostelium discoideum (Social amoeba).